The primary structure comprises 65 residues: Protein YSY6 (65 aa).

The helical transmembrane segment at 45 to 65 threads the bilayer; it reads LGILLFLLVGGGVLQLISYIL.

The protein belongs to the RAMP4 family.

The protein localises to the membrane. It is found in the endoplasmic reticulum membrane. Functionally, interacts with target proteins during their translocation into the lumen of the endoplasmic reticulum. Protects unfolded target proteins against degradation during ER stress. May facilitate glycosylation of target proteins after termination of ER stress. The protein is Protein YSY6 (YSY6) of Saccharomyces cerevisiae (strain ATCC 204508 / S288c) (Baker's yeast).